We begin with the raw amino-acid sequence, 156 residues long: Crossover junction endodeoxyribonuclease RuvC (156 aa).

Residues Asp7, Glu66, and Asp138 contribute to the active site. Positions 7, 66, and 138 each coordinate Mg(2+).

Belongs to the RuvC family. As to quaternary structure, homodimer which binds Holliday junction (HJ) DNA. The HJ becomes 2-fold symmetrical on binding to RuvC with unstacked arms; it has a different conformation from HJ DNA in complex with RuvA. In the full resolvosome a probable DNA-RuvA(4)-RuvB(12)-RuvC(2) complex forms which resolves the HJ. Requires Mg(2+) as cofactor.

The protein localises to the cytoplasm. It catalyses the reaction Endonucleolytic cleavage at a junction such as a reciprocal single-stranded crossover between two homologous DNA duplexes (Holliday junction).. In terms of biological role, the RuvA-RuvB-RuvC complex processes Holliday junction (HJ) DNA during genetic recombination and DNA repair. Endonuclease that resolves HJ intermediates. Cleaves cruciform DNA by making single-stranded nicks across the HJ at symmetrical positions within the homologous arms, yielding a 5'-phosphate and a 3'-hydroxyl group; requires a central core of homology in the junction. The consensus cleavage sequence is 5'-(A/T)TT(C/G)-3'. Cleavage occurs on the 3'-side of the TT dinucleotide at the point of strand exchange. HJ branch migration catalyzed by RuvA-RuvB allows RuvC to scan DNA until it finds its consensus sequence, where it cleaves and resolves the cruciform DNA. This chain is Crossover junction endodeoxyribonuclease RuvC, found in Ehrlichia chaffeensis (strain ATCC CRL-10679 / Arkansas).